The sequence spans 61 residues: Small ribosomal subunit protein uS14 (61 aa).

Zn(2+) is bound by residues cysteine 24, cysteine 27, cysteine 40, and cysteine 43.

This sequence belongs to the universal ribosomal protein uS14 family. Zinc-binding uS14 subfamily. Part of the 30S ribosomal subunit. Contacts proteins S3 and S10. Zn(2+) serves as cofactor.

In terms of biological role, binds 16S rRNA, required for the assembly of 30S particles and may also be responsible for determining the conformation of the 16S rRNA at the A site. The chain is Small ribosomal subunit protein uS14 from Geobacillus thermodenitrificans (strain NG80-2).